We begin with the raw amino-acid sequence, 70 residues long: Small ribosomal subunit protein bS18c (70 aa).

The protein belongs to the bacterial ribosomal protein bS18 family. Part of the 30S ribosomal subunit.

It localises to the plastid. The protein localises to the chloroplast. This Gracilaria tenuistipitata var. liui (Red alga) protein is Small ribosomal subunit protein bS18c.